The chain runs to 251 residues: 3-isopropylmalate dehydratase small subunit 1 (251 aa).

A chloroplast-targeting transit peptide spans methionine 1 to arginine 59.

Belongs to the LeuD family. As to quaternary structure, heterodimer of the large LEUC/IIL1 subunit and the small LEUD (SSU1, SSU2 or SSU3) subunits. In terms of tissue distribution, expressed at low levels in roots, root tips, at the basis of the hypocotyls, and in emerging leaves. In young seedlings, expressed in cotyledon epidermal cells. In hypocotyls, expressed in peripheral cells. In seedling roots, expressed in the epidermis, including root hairs, and throughout the cortex. In rosette leaves, expressed in the upper and lower epidermis. In roots of adult plants, expressed in the root tips and cortex of the mature root enclosing the stele. In flowering stalks, expressed in the epidermis. Expressed in the carpel epidermis.

The protein localises to the plastid. It is found in the chloroplast stroma. The catalysed reaction is (2R,3S)-3-isopropylmalate = (2S)-2-isopropylmalate. It participates in amino-acid biosynthesis; L-leucine biosynthesis; L-leucine from 3-methyl-2-oxobutanoate: step 2/4. Its function is as follows. Catalyzes the isomerization between 2-isopropylmalate and 3-isopropylmalate, via the formation of 2-isopropylmaleate. Plays an essential role in leucine biosynthesis. Functions in both the biosynthesis of leucine, and in the methionine chain elongation pathway of aliphatic glucosinolate formation. Plays an essential role in female gametophyte development. This is 3-isopropylmalate dehydratase small subunit 1 from Arabidopsis thaliana (Mouse-ear cress).